The primary structure comprises 288 residues: Cyclin-dependent kinase 2 homolog (288 aa).

Residues 4–284 (YHGLEKIGEG…AKQAIEHPYF (281 aa)) form the Protein kinase domain. ATP is bound by residues 10–18 (IGEGTYGVV) and lysine 32. The residue at position 14 (threonine 14) is a Phosphothreonine. Tyrosine 15 bears the Phosphotyrosine mark. Catalysis depends on aspartate 125, which acts as the Proton acceptor. A Phosphothreonine modification is found at threonine 158.

This sequence belongs to the protein kinase superfamily. CMGC Ser/Thr protein kinase family. CDC2/CDKX subfamily. As to quaternary structure, may form a complex composed of at least the catalytic subunit CRK2 and a cyclin. The cofactor is Mg(2+).

The protein resides in the cytoplasm. The catalysed reaction is L-seryl-[protein] + ATP = O-phospho-L-seryl-[protein] + ADP + H(+). It carries out the reaction L-threonyl-[protein] + ATP = O-phospho-L-threonyl-[protein] + ADP + H(+). It catalyses the reaction [DNA-directed RNA polymerase] + ATP = phospho-[DNA-directed RNA polymerase] + ADP + H(+). Phosphorylation at Thr-14 or Tyr-15 inactivates the enzyme, while phosphorylation at Thr-158 activates it. Functionally, serine/threonine-protein kinase. Involved in the control of the cell cycle. Required for entry into S-phase and mitosis. Probable component of the kinase complex that phosphorylates the repetitive C-terminus of RNA polymerase II. The chain is Cyclin-dependent kinase 2 homolog from Plasmodium berghei (strain Anka).